Reading from the N-terminus, the 462-residue chain is Lysophospholipid acyltransferase 1 (462 aa).

Transmembrane regions (helical) follow at residues 9–29, 52–72, 84–104, 158–178, 211–231, 263–283, 353–373, 396–416, and 431–451; these read SIGV…TIPV, FLSY…PMTI, CGII…VFYM, SLIE…GPVY, AILQ…QYPL, YFIW…FSGW, AVWH…ALMI, IMVF…AVGF, and VYYI…VVPA. His-356 is a catalytic residue.

This sequence belongs to the membrane-bound acyltransferase family. As to expression, expressed in roots, rosette leaves, petals, stigma, chalazal endosperm of developing seeds and vascular bundles of siliques.

Its subcellular location is the endoplasmic reticulum membrane. It catalyses the reaction a 1-acyl-sn-glycero-3-phosphocholine + an acyl-CoA = a 1,2-diacyl-sn-glycero-3-phosphocholine + CoA. It carries out the reaction 1-(9Z-octadecenoyl)-sn-glycero-3-phosphocholine + (9Z)-octadecenoyl-CoA = 1,2-di-(9Z-octadecenoyl)-sn-glycero-3-phosphocholine + CoA. The catalysed reaction is 1-(9Z-octadecenoyl)-sn-glycero-3-phosphocholine + (9Z,12Z)-octadecadienoyl-CoA = 1-(9Z)-octadecenoyl-2-(9Z,12Z)-octadecadienoyl-sn-glycero-3-phosphocholine + CoA. The enzyme catalyses (9Z,12Z,15Z)-octadecatrienoyl-CoA + 1-(9Z-octadecenoyl)-sn-glycero-3-phosphocholine = 1-(9Z-octadecaenoyl)-2-(9Z,12Z,15Z-octadecatrienoyl)-sn-glycero-3-phosphocholine + CoA. It catalyses the reaction a 1-acyl-sn-glycero-3-phosphoethanolamine + an acyl-CoA = a 1,2-diacyl-sn-glycero-3-phosphoethanolamine + CoA. It carries out the reaction a 1-acyl-sn-glycero-3-phospho-L-serine + an acyl-CoA = a 1,2-diacyl-sn-glycero-3-phospho-L-serine + CoA. Functionally, lysophospholipid acyltransferase with broad specificity. Mediates the conversion of lysophosphatidylethanolamine (1-acyl-sn-glycero-3-phosphoethanolamine or LPE) into phosphatidylethanolamine (1,2-diacyl-sn-glycero-3-phosphoethanolamine or PE) (LPEAT activity). Catalyzes the acylation of lysophosphatidylserine (1-acyl-2-hydroxy-sn-glycero-3-phospho-L-serine or LPS) into phosphatidylserine (1,2-diacyl-sn-glycero-3-phospho-L-serine or PS) (LPSAT activity). Can convert lysophosphatidylcholine (1-acyl-sn-glycero-3-phosphocholine or LPC) into phosphatidylcholine (1,2-diacyl-sn-glycero-3-phosphocholine or PC) (LPCAT activity). Exhibits preference for C18-unsaturated acyl-CoA when transferring an acyl group to lysophosphatidylcholine. Can also utilize lysophosphatidylglycerol (LPG) as substrate in vitro. Has neither activity towards lysophosphatidic acid (LPA) nor lysophosphatidylinositol (LPI). Lysophospholipid acyltransferases catalyze the reacylation step of the phospholipid remodeling pathway also known as the Lands cycle. The primary function of the Lands cycle is to provide a route for acyl remodeling to modify fatty acid (FA) composition of phospholipids derived from the Kennedy pathway. Is involved in PC acyl editing and phosphocholine headgroup exchange between PC and diacylglycerols. This processes control the majority of acyl fluxes through PC to provide polyunsaturated fatty acids for triacylglycerols synthesis in seeds. Involved with LPCAT2 in the direct incorporation of newly synthesized fatty acids exported form the chloroplast into PC through acyl editing. The protein is Lysophospholipid acyltransferase 1 of Arabidopsis thaliana (Mouse-ear cress).